A 104-amino-acid polypeptide reads, in one-letter code: Ig kappa chain V region XP-1 (104 aa).

Residues 1–24 form a framework-1 region; sequence ADIVMTQTPASVSEPVGGTVTIKC. Positions 25-35 are complementarity-determining-1; the sequence is QASQSIFBBLA. Residues 36–49 are framework-2; the sequence is WYQKPGZPPKGLLY. Residues 50-56 form a complementarity-determining-2 region; the sequence is TBYTLAS. The framework-3 stretch occupies residues 57-88; it reads GVSSRFSGGGSGTBFTLTISDLECABAATYYC. The complementarity-determining-3 stretch occupies residues 89–100; it reads EXTGVSZBXBKG. The framework-4 stretch occupies residues 101–104; that stretch reads FGGG.

The polypeptide is Ig kappa chain V region XP-1 (Oryctolagus cuniculus (Rabbit)).